Consider the following 226-residue polypeptide: uncharacterized protein (226 aa).

Positions 4–226 (LQFQQVGYWY…FTVKENVAVV (223 aa)) constitute an ABC transporter domain. 38–45 (GTSGTGKT) lines the ATP pocket.

Belongs to the ABC transporter superfamily.

This is an uncharacterized protein from Bacillus subtilis (strain 168).